Here is a 446-residue protein sequence, read N- to C-terminus: Phosphoglucosamine mutase (446 aa).

Catalysis depends on Ser88, which acts as the Phosphoserine intermediate. Ser88, Asp231, Asp233, and Asp235 together coordinate Mg(2+). Ser88 bears the Phosphoserine mark.

Belongs to the phosphohexose mutase family. Mg(2+) serves as cofactor. Activated by phosphorylation.

It carries out the reaction alpha-D-glucosamine 1-phosphate = D-glucosamine 6-phosphate. Catalyzes the conversion of glucosamine-6-phosphate to glucosamine-1-phosphate. The polypeptide is Phosphoglucosamine mutase (Methanococcus vannielii (strain ATCC 35089 / DSM 1224 / JCM 13029 / OCM 148 / SB)).